Consider the following 48-residue polypeptide: Small ribosomal subunit protein uS14 (48 aa).

Residues Cys-13, Cys-16, Cys-31, and Cys-34 each coordinate Zn(2+).

The protein belongs to the universal ribosomal protein uS14 family. Zinc-binding uS14 subfamily. In terms of assembly, part of the 30S ribosomal subunit. The cofactor is Zn(2+).

In terms of biological role, binds 16S rRNA, required for the assembly of 30S particles. The protein is Small ribosomal subunit protein uS14 of Methanopyrus kandleri (strain AV19 / DSM 6324 / JCM 9639 / NBRC 100938).